Here is a 234-residue protein sequence, read N- to C-terminus: Thiamine-phosphate synthase (234 aa).

4-amino-2-methyl-5-(diphosphooxymethyl)pyrimidine contacts are provided by residues 65-69 and asparagine 97; that span reads QYRNK. 2 residues coordinate Mg(2+): aspartate 98 and aspartate 117. 4-amino-2-methyl-5-(diphosphooxymethyl)pyrimidine is bound at residue serine 136. 163–165 is a binding site for 2-[(2R,5Z)-2-carboxy-4-methylthiazol-5(2H)-ylidene]ethyl phosphate; that stretch reads SHT. Residue lysine 166 participates in 4-amino-2-methyl-5-(diphosphooxymethyl)pyrimidine binding. 2-[(2R,5Z)-2-carboxy-4-methylthiazol-5(2H)-ylidene]ethyl phosphate-binding positions include glycine 192 and 212–213; that span reads IS.

This sequence belongs to the thiamine-phosphate synthase family. The cofactor is Mg(2+).

The catalysed reaction is 2-[(2R,5Z)-2-carboxy-4-methylthiazol-5(2H)-ylidene]ethyl phosphate + 4-amino-2-methyl-5-(diphosphooxymethyl)pyrimidine + 2 H(+) = thiamine phosphate + CO2 + diphosphate. The enzyme catalyses 2-(2-carboxy-4-methylthiazol-5-yl)ethyl phosphate + 4-amino-2-methyl-5-(diphosphooxymethyl)pyrimidine + 2 H(+) = thiamine phosphate + CO2 + diphosphate. It carries out the reaction 4-methyl-5-(2-phosphooxyethyl)-thiazole + 4-amino-2-methyl-5-(diphosphooxymethyl)pyrimidine + H(+) = thiamine phosphate + diphosphate. It participates in cofactor biosynthesis; thiamine diphosphate biosynthesis; thiamine phosphate from 4-amino-2-methyl-5-diphosphomethylpyrimidine and 4-methyl-5-(2-phosphoethyl)-thiazole: step 1/1. Condenses 4-methyl-5-(beta-hydroxyethyl)thiazole monophosphate (THZ-P) and 2-methyl-4-amino-5-hydroxymethyl pyrimidine pyrophosphate (HMP-PP) to form thiamine monophosphate (TMP). The sequence is that of Thiamine-phosphate synthase from Xylella fastidiosa (strain 9a5c).